The primary structure comprises 513 residues: Maturase K (513 aa).

Belongs to the intron maturase 2 family. MatK subfamily.

It is found in the plastid. The protein resides in the chloroplast. In terms of biological role, usually encoded in the trnK tRNA gene intron. Probably assists in splicing its own and other chloroplast group II introns. In Pinus parviflora (Japanese white pine), this protein is Maturase K.